Here is a 368-residue protein sequence, read N- to C-terminus: Serine/threonine-protein kinase CAK1 (368 aa).

The 368-residue stretch at 1-368 (MKLDSIDITH…QRILQELEKP (368 aa)) folds into the Protein kinase domain. Asp-156 serves as the catalytic Proton acceptor.

This sequence belongs to the protein kinase superfamily. CMGC Ser/Thr protein kinase family. CDC2/CDKX subfamily.

The catalysed reaction is L-seryl-[protein] + ATP = O-phospho-L-seryl-[protein] + ADP + H(+). It carries out the reaction L-threonyl-[protein] + ATP = O-phospho-L-threonyl-[protein] + ADP + H(+). In Saccharomyces cerevisiae (strain ATCC 204508 / S288c) (Baker's yeast), this protein is Serine/threonine-protein kinase CAK1 (CAK1).